The sequence spans 411 residues: Solute carrier RCH1 (411 aa).

At 1–17 (MSLETFRESKAYKWTSK) the chain is on the cytoplasmic side. Residues 18–38 (VISFLIGQWFFIFLGVFIALA) form a helical membrane-spanning segment. Residues 39–52 (HSYPEFAKQGGTIR) lie on the Extracellular side of the membrane. A helical membrane pass occupies residues 53–73 (AEYSIGYGAVAVIFLISGLSM). Topologically, residues 74–89 (STKQLLVNVANWRAHF) are cytoplasmic. The helical transmembrane segment at 90 to 110 (TVLSMSFLVTSAIIYGIASGI) threads the bilayer. Topologically, residues 111–120 (KASHNGQIDD) are extracellular. The chain crosses the membrane as a helical span at residues 121–141 (WLLIGLIVTHACPTTVSSNVV). The Cytoplasmic segment spans residues 142-150 (MTKQAHGND). Residues 151 to 171 (ILTLCEVFIGNVLGAFITPAL) form a helical membrane-spanning segment. At 172–204 (LQMYMRGTWEIGNPSHQTQGDSTVQELYAHTMK) the chain is on the extracellular side. A helical membrane pass occupies residues 205–225 (QLGLSVFVPLFVGQVVQNIFP). At 226–242 (KQTKWCLTTFKLNKVGS) the chain is on the cytoplasmic side. The chain crosses the membrane as a helical span at residues 243-263 (FMLLLIMFQSFSTAFAQHAFT). Residues 264–269 (SVSHAS) are Extracellular-facing. Residues 270–290 (IIFLVFFNIGIYLFFTVLTFF) traverse the membrane as a helical segment. Residues 291–329 (YSRPFWILRVFKEEPNESSSKLYRYSYAFFRPFYYNRKD) lie on the Cytoplasmic side of the membrane. Residues 330–350 (TVAVMLCGPAKTAALGVSLVS) form a helical membrane-spanning segment. Over 351 to 361 (SQYGSHNPKLG) the chain is Extracellular. Residues 362 to 382 (IILVPLVLYQAEQVMTANVLV) traverse the membrane as a helical segment. Over 383 to 411 (SFMRKWIHAEDKVPEDEETSVGSDNDPKK) the chain is Cytoplasmic.

It belongs to the bile acid:sodium symporter (BASS) (TC 2.A.28) family.

Its subcellular location is the cell membrane. It localises to the bud neck. Functionally, solute carrier protein that negatively regulates the cytosolic homeostasis in response to high levels of extracellular calcium. This Candida albicans (strain SC5314 / ATCC MYA-2876) (Yeast) protein is Solute carrier RCH1.